The following is a 91-amino-acid chain: M-myrmeciitoxin-Mb3a (91 aa).

Positions 1 to 21 (MKLSCLSLALAIILILAIVHS) are cleaved as a signal peptide. The propeptide occupies 22–54 (PNMEVKALADPEADAFGEANAFGEADAFAEANA).

In terms of assembly, homodimer; disulfide-linked. In terms of tissue distribution, expressed by the venom gland and reservoir.

It is found in the secreted. Its function is as follows. Causes a significant and dose-dependent histamine release, probably by influencing the signal transduction of mast cells through a non-IgE-mediated pathway. This peptide does not have cytotoxic activities. In Myrmecia banksi (Jack jumper ant), this protein is M-myrmeciitoxin-Mb3a.